The sequence spans 327 residues: MESVFDYEDIQLIPAKCIVRSRSECDTSVILGEHSFRLPVVPANMQTIIDENIALFLAQNGYFYIMHRFEPEKRLSFIKNMKSKGLFASISVGVKREEYDFIKQLAQENLSPEYITIDIAHGHSNTVIEMIQHIKKYLPKSFVIAGNVGTPEAVRELEHAGADATKVGIGPGKVCITKIKTGFGTGGWQLAALRWCSKAASKPIIADGGIRTPGDIAKSIRFGATMVMIGSLFAGHEESPGETIEKDGKLYKEYFGSASEFQKGEKRNVEGKKMFVEYKGPLKDTLIEMEQDLQSSISYAGGKSLDAIRTVDYVIVKNSIFNGDRIY.

C175 functions as the Thioimidate intermediate in the catalytic mechanism. Position 204-227 (204-227) interacts with NADP(+); that stretch reads IIADGGIRTPGDIAKSIRFGATMV.

Belongs to the IMPDH/GMPR family. GuaC type 2 subfamily.

The catalysed reaction is IMP + NH4(+) + NADP(+) = GMP + NADPH + 2 H(+). In terms of biological role, catalyzes the irreversible NADPH-dependent deamination of GMP to IMP. It functions in the conversion of nucleobase, nucleoside and nucleotide derivatives of G to A nucleotides, and in maintaining the intracellular balance of A and G nucleotides. In Clostridium acetobutylicum (strain ATCC 824 / DSM 792 / JCM 1419 / IAM 19013 / LMG 5710 / NBRC 13948 / NRRL B-527 / VKM B-1787 / 2291 / W), this protein is GMP reductase.